A 493-amino-acid chain; its full sequence is Dipeptide and tripeptide permease B (493 aa).

At 1–27 (MERSTPTGLLQQPKPFFMIFFVELWER) the chain is on the cytoplasmic side. Residues 28–48 (FGYYGVQGILAVFFVQQLGFS) traverse the membrane as a helical segment. The Periplasmic segment spans residues 49–52 (QEQA). The helical transmembrane segment at 53 to 73 (FVTFGAFAALVYGLISIGGYV) threads the bilayer. Over 74–82 (GDHLLGTKR) the chain is Cytoplasmic. A helical membrane pass occupies residues 83–103 (TMVLGAVVLAAGYFATGLSLY). Over 104–106 (QPN) the chain is Periplasmic. A helical transmembrane segment spans residues 107 to 127 (LIFFALGTIAVGNGLFKANPA). Over 128 to 146 (SLLSKCYPPKDPRLDGAFT) the chain is Cytoplasmic. Residues 147–167 (LFYMSINIGSLLSLSLAPVIA) traverse the membrane as a helical segment. At 168–169 (ER) the chain is on the periplasmic side. A helical membrane pass occupies residues 170–190 (FGYTVTYYLCGIGLIFALLVY). Residues 191–212 (FCCRHMVRHIGSEPDTKPLNWR) are Cytoplasmic-facing. 2 helical membrane-spanning segments follow: residues 213–233 (NLLL…WLMN) and 234–254 (HVFI…FIFF). The Cytoplasmic portion of the chain corresponds to 255–267 (REASKQDRLGRNK). A helical transmembrane segment spans residues 268–288 (MFVAFILMIEAIVFYVLYAQM). Residues 289–311 (PTSLNFFAINNVHHEILGFSINP) are Periplasmic-facing. The chain crosses the membrane as a helical span at residues 312–332 (VSFQALNPFWVVVASPILASI). Residues 333–350 (YTRLGSQNRDLSMPAKFT) are Cytoplasmic-facing. The chain crosses the membrane as a helical span at residues 351–371 (LGMFLCSLGFLTAAAAGMWFA). The Periplasmic segment spans residues 372–379 (DAQGLTSP). A helical transmembrane segment spans residues 380–400 (WFIVLVYLFQSLGELMISALG). At 401–424 (LAMVAALVPQYLMGFILGMWFLTQ) the chain is on the cytoplasmic side. The chain crosses the membrane as a helical span at residues 425–445 (AASFLIGGYVATFTATPEGMT). Residues 446–456 (DPLETLPIYTD) lie on the Periplasmic side of the membrane. The chain crosses the membrane as a helical span at residues 457–477 (VFGKIGMVTLVIALVMALLIP). The Cytoplasmic segment spans residues 478–493 (WLNRMINSSAAEDAVA).

The protein belongs to the major facilitator superfamily. Proton-dependent oligopeptide transporter (POT/PTR) (TC 2.A.17) family. DtpB subfamily.

The protein localises to the cell inner membrane. Functionally, proton-dependent permease that transports di- and tripeptides. This chain is Dipeptide and tripeptide permease B, found in Yersinia enterocolitica serotype O:8 / biotype 1B (strain NCTC 13174 / 8081).